Here is a 175-residue protein sequence, read N- to C-terminus: Granulocyte colony-stimulating factor (175 aa).

2 disulfides stabilise this stretch: Cys-37/Cys-43 and Cys-65/Cys-75. A glycan (O-linked (GalNAc...) threonine) is linked at Thr-134.

This sequence belongs to the IL-6 superfamily. In terms of assembly, monomer. O-glycosylated.

It localises to the secreted. Granulocyte/macrophage colony-stimulating factors are cytokines that act in hematopoiesis by controlling the production, differentiation, and function of 2 related white cell populations of the blood, the granulocytes and the monocytes-macrophages. This CSF induces granulocytes. The polypeptide is Granulocyte colony-stimulating factor (CSF3) (Canis lupus familiaris (Dog)).